The following is a 189-amino-acid chain: Blue copper protein (189 aa).

The first 24 residues, 1–24, serve as a signal peptide directing secretion; it reads MAFSNALVLCFLLAIINMALPSLA. The region spanning 25 to 124 is the Phytocyanin domain; the sequence is TVYTVGDTSG…GMKLSIKVKA (100 aa). 3 residues coordinate Cu cation: His65, Cys106, and His111. A disulfide bridge links Cys78 with Cys106. A compositionally biased stretch (low complexity) spans 127 to 160; the sequence is GSSAAPSATPSSSGKGSPSSDDTPAATTTTTTPT. Residues 127–165 are disordered; it reads GSSAAPSATPSSSGKGSPSSDDTPAATTTTTTPTKQNES. Asn163 carries an N-linked (GlcNAc...) asparagine glycan.

The chain is Blue copper protein from Pisum sativum (Garden pea).